A 159-amino-acid polypeptide reads, in one-letter code: Succinate dehydrogenase [ubiquinone] cytochrome b small subunit, mitochondrial (159 aa).

A mitochondrion-targeting transit peptide spans 1–56 (MAVLLKLGVLCSGQGARALLLRSRVVRPAYVSAFLQDQPTQGRCGTQHIHLSPSHH). Topologically, residues 57–63 (SGSKAAS) are mitochondrial matrix. The helical transmembrane segment at 64 to 85 (LHWTSERVVSVLLLGLIPAGYL) threads the bilayer. The Mitochondrial intermembrane segment spans residues 86–90 (NPCSV). Residues 91-111 (VDYSLAAALTLHSHWGLGQVV) form a helical membrane-spanning segment. Position 102 (His102) interacts with heme b. Residues 112–120 (TDYVHGDTL) are Mitochondrial matrix-facing. Residue Tyr114 participates in a ubiquinone binding. The chain crosses the membrane as a helical span at residues 121–142 (PKAARAGLLALSALTFAGLCYF). Topologically, residues 143 to 159 (NYHDVGICRAVAMLWKL) are mitochondrial intermembrane.

It belongs to the CybS family. In terms of assembly, component of complex II composed of four subunits: the flavoprotein (FP) SDHA, iron-sulfur protein (IP) SDHB, and a cytochrome b560 composed of SDHC and SDHD.

The protein resides in the mitochondrion inner membrane. The protein operates within carbohydrate metabolism; tricarboxylic acid cycle. Functionally, membrane-anchoring subunit of succinate dehydrogenase (SDH) that is involved in complex II of the mitochondrial electron transport chain and is responsible for transferring electrons from succinate to ubiquinone (coenzyme Q). SDH also oxidizes malate to the non-canonical enol form of oxaloacetate, enol-oxaloacetate. Enol-oxaloacetate, which is a potent inhibitor of the succinate dehydrogenase activity, is further isomerized into keto-oxaloacetate. This Mus musculus (Mouse) protein is Succinate dehydrogenase [ubiquinone] cytochrome b small subunit, mitochondrial (Sdhd).